A 1253-amino-acid polypeptide reads, in one-letter code: Cytoplasmic FMR1-interacting protein 2 (1253 aa).

Residue lysine 1037 is modified to N6-acetyllysine.

The protein belongs to the CYFIP family. As to quaternary structure, component of the WAVE1 complex composed of ABI2, CYFIP2, BRK1, NCKAP1 and WASF1/WAVE1. Interacts with RAC1 (activated form) which causes the complex to dissociate, releasing activated WASF1. The complex can also be activated by NCK1. Interacts with SHANK3; the interaction mediates the association of SHANK3 with the WAVE1 complex. Interacts with FMR1; the interaction occurs in a RNA-dependent manner. Interacts with FXR1 and FXR2. Interacts with TMEM108 (via N-terminus); the interaction associates TMEM108 with the WAVE1 complex.

It localises to the cytoplasm. The protein resides in the nucleus. Its subcellular location is the perinuclear region. It is found in the synapse. The protein localises to the synaptosome. In terms of biological role, involved in T-cell adhesion and p53-dependent induction of apoptosis. Does not bind RNA. As component of the WAVE1 complex, required for BDNF-NTRK2 endocytic trafficking and signaling from early endosomes. In Pongo abelii (Sumatran orangutan), this protein is Cytoplasmic FMR1-interacting protein 2.